Consider the following 127-residue polypeptide: Large ribosomal subunit protein bL12c (127 aa).

Residues 104-127 are disordered; that stretch reads GVAKDAAEEAKKQIEDAGGKASLK. A compositionally biased stretch (basic and acidic residues) spans 105-121; sequence VAKDAAEEAKKQIEDAG.

Belongs to the bacterial ribosomal protein bL12 family. As to quaternary structure, homodimer. Part of the ribosomal stalk of the 50S ribosomal subunit. Forms a multimeric L10(L12)X complex, where L10 forms an elongated spine to which 2 to 4 L12 dimers bind in a sequential fashion. Binds GTP-bound translation factors.

Its subcellular location is the plastid. It is found in the chloroplast. In terms of biological role, forms part of the ribosomal stalk which helps the ribosome interact with GTP-bound translation factors. Is thus essential for accurate translation. The protein is Large ribosomal subunit protein bL12c of Trieres chinensis (Marine centric diatom).